The following is a 310-amino-acid chain: UPF0282 protein PF0593 (310 aa).

This sequence belongs to the UPF0282 family.

In Pyrococcus furiosus (strain ATCC 43587 / DSM 3638 / JCM 8422 / Vc1), this protein is UPF0282 protein PF0593.